The following is a 707-amino-acid chain: Polyribonucleotide nucleotidyltransferase (707 aa).

2 residues coordinate Mg(2+): aspartate 486 and aspartate 492. Positions 553–612 (PTVTTLRVLPDKIPIIIGPAGKNIKKIIEETKVKIDLDPEGLVKIYATSKEAAEKAVSMI) constitute a KH domain. Residues 622–690 (GEVYMGKVTR…DQGRIKVSLK (69 aa)) form the S1 motif domain.

The protein belongs to the polyribonucleotide nucleotidyltransferase family. The cofactor is Mg(2+).

Its subcellular location is the cytoplasm. The enzyme catalyses RNA(n+1) + phosphate = RNA(n) + a ribonucleoside 5'-diphosphate. In terms of biological role, involved in mRNA degradation. Catalyzes the phosphorolysis of single-stranded polyribonucleotides processively in the 3'- to 5'-direction. The polypeptide is Polyribonucleotide nucleotidyltransferase (Sulfurihydrogenibium azorense (strain DSM 15241 / OCM 825 / Az-Fu1)).